The chain runs to 322 residues: Glycerol-3-phosphate dehydrogenase [NAD(P)+] (322 aa).

Residues tryptophan 13, histidine 33, and lysine 99 each coordinate NADPH. Sn-glycerol 3-phosphate is bound by residues lysine 99, glycine 127, and serine 129. Alanine 131 lines the NADPH pocket. 5 residues coordinate sn-glycerol 3-phosphate: lysine 182, aspartate 235, serine 245, arginine 246, and asparagine 247. Lysine 182 (proton acceptor) is an active-site residue. Arginine 246 provides a ligand contact to NADPH. Glutamate 272 is a binding site for NADPH.

The protein belongs to the NAD-dependent glycerol-3-phosphate dehydrogenase family.

The protein resides in the cytoplasm. The catalysed reaction is sn-glycerol 3-phosphate + NAD(+) = dihydroxyacetone phosphate + NADH + H(+). It carries out the reaction sn-glycerol 3-phosphate + NADP(+) = dihydroxyacetone phosphate + NADPH + H(+). The protein operates within membrane lipid metabolism; glycerophospholipid metabolism. Catalyzes the reduction of the glycolytic intermediate dihydroxyacetone phosphate (DHAP) to sn-glycerol 3-phosphate (G3P), the key precursor for phospholipid synthesis. The chain is Glycerol-3-phosphate dehydrogenase [NAD(P)+] from Ruthia magnifica subsp. Calyptogena magnifica.